Reading from the N-terminus, the 230-residue chain is Nicotinamide riboside kinase 2 (230 aa).

Residue 9–17 coordinates ATP; sequence GMTNGGKTT. T16 and D35 together coordinate Mg(2+). The Proton acceptor role is filled by D35. Residues 35–38 and 54–55 contribute to the substrate site; these read DDFF and WD. Position 130 (R130) interacts with ATP. Substrate is bound by residues R131 and 136–137; that span reads YT. Residues 134–136 and 174–176 each bind ATP; these read RNY and KSR. The segment at 191–230 is disordered; that stretch reads LLNRSQESAPSPARPARTQGPGRGCGHRTARPAASQQDSM.

It belongs to the uridine kinase family. NRK subfamily. Monomer. Interacts with ITGB1 alone or when associated with alpha-7, but not with alpha-5. As to expression, predominantly expressed in skeletal muscle and, at a much lower level, in the heart (at protein level). No expression in brain, kidney, liver, lung, pancreas nor placenta.

It catalyses the reaction beta-nicotinamide D-riboside + ATP = beta-nicotinamide D-ribonucleotide + ADP + H(+). The enzyme catalyses beta-D-ribosylnicotinate + ATP = nicotinate beta-D-ribonucleotide + ADP + H(+). Its pathway is cofactor biosynthesis; NAD(+) biosynthesis. Its function is as follows. Catalyzes the phosphorylation of nicotinamide riboside (NR) and nicotinic acid riboside (NaR) to form nicotinamide mononucleotide (NMN) and nicotinic acid mononucleotide (NaMN). Reduces laminin matrix deposition and cell adhesion to laminin, but not to fibronectin. Involved in the regulation of PXN at the protein level and of PXN tyrosine phosphorylation. May play a role in the regulation of terminal myogenesis. This is Nicotinamide riboside kinase 2 (NMRK2) from Homo sapiens (Human).